We begin with the raw amino-acid sequence, 353 residues long: (-)-beta-caryophyllene synthase ((2E,6E)-farnesyl diphosphate cyclizing) (353 aa).

Asp-85 and Asp-89 together coordinate Mg(2+). The short motif at 85–89 is the DDXXD motif element; the sequence is DDQFD. Position 179 (Arg-179) interacts with substrate. Residues Asn-225 and Ser-229 each coordinate Mg(2+). Residue Lys-232 participates in substrate binding. Residue Glu-233 coordinates Mg(2+). 320–321 provides a ligand contact to substrate; that stretch reads RF.

The protein belongs to the terpene synthase family. Requires Mg(2+) as cofactor.

The enzyme catalyses (2E,6E)-farnesyl diphosphate = (-)-(E)-beta-caryophyllene + diphosphate. Its pathway is secondary metabolite biosynthesis; terpenoid biosynthesis. Catalyzes the conversion of (2E,6E)-farnesyl diphosphate (FPP) to yield the bicyclic sesquiterpene (2S,10R)-(-)-(E)-beta-caryophyllene via a probable 1,10-cyclization, which could involve the abstraction of the pyrophosphate from FPP to yield a (E,E)-germacradienyl cation. In Saccharothrix espanaensis (strain ATCC 51144 / DSM 44229 / JCM 9112 / NBRC 15066 / NRRL 15764), this protein is (-)-beta-caryophyllene synthase ((2E,6E)-farnesyl diphosphate cyclizing) (ptlA).